Reading from the N-terminus, the 1382-residue chain is Histone-lysine N-methyltransferase SUVR5 (1382 aa).

Disordered regions lie at residues 43–62 (TVTG…SEPK) and 354–373 (GNTN…NTPE). C2H2-type zinc fingers lie at residues 735-758 (FACA…EERH), 769-792 (LQCI…QAVH), and 838-861 (FVCK…QAEH). Positions 915-935 (RRMQGSKSLGTEGNTEAGVSP) are disordered. Positions 919 to 928 (GSKSLGTEGN) are enriched in polar residues. In terms of domain architecture, Pre-SET spans 1145–1221 (LRCSCRSSVC…TCQNRVLQNG (77 aa)). Zn(2+) contacts are provided by cysteine 1147, cysteine 1149, cysteine 1154, cysteine 1159, cysteine 1182, cysteine 1203, cysteine 1207, cysteine 1209, and cysteine 1213. In terms of domain architecture, SET spans 1224-1356 (AKLEVFRTES…AGEEITRDYG (133 aa)). S-adenosyl-L-methionine is bound by residues 1234–1236 (KGW), tyrosine 1277, and 1313–1314 (NH). Residue cysteine 1316 coordinates Zn(2+). Position 1355 (tyrosine 1355) interacts with S-adenosyl-L-methionine. Residues 1366–1382 (NEHPCHCKATNCRGLLS) enclose the Post-SET domain. Residues cysteine 1370, cysteine 1372, and cysteine 1377 each contribute to the Zn(2+) site.

The protein belongs to the class V-like SAM-binding methyltransferase superfamily. Component of a regulatory complex with LDL1/SWP1. Interacts with LDL1/SWP1.

The protein resides in the nucleus. It localises to the chromosome. It catalyses the reaction L-lysyl-[histone] + S-adenosyl-L-methionine = N(6)-methyl-L-lysyl-[histone] + S-adenosyl-L-homocysteine + H(+). In terms of biological role, histone methyltransferase that functions together with its binding partner LDL1/SWP1 as one of the regulators of flower timing in Arabidopsis. Mediates H3K9me2 deposition and regulates gene expression in a DNA methylation-independent manner. Binds DNA through its zinc fingers and represses the expression of a subset of stimulus response genes. May represent a novel mechanism for plants to regulate their chromatin and transcriptional state, which may allow for the adaptability and modulation necessary to rapidly respond to environment or developmental cues. This is Histone-lysine N-methyltransferase SUVR5 from Arabidopsis thaliana (Mouse-ear cress).